Reading from the N-terminus, the 535-residue chain is Cytochrome P450 71C3 (535 aa).

Residues 23-43 (QTLTLLLIAVPTVLLLLASLA) traverse the membrane as a helical segment. Cysteine 475 is a heme binding site.

It belongs to the cytochrome P450 family. It depends on heme as a cofactor.

It localises to the membrane. Its pathway is secondary metabolite biosynthesis; 2,4-dihydroxy-1,4-benzoxazin-3-one biosynthesis; 2,4-dihydroxy-1,4-benzoxazin-3-one from indoleglycerol phosphate: step 5/5. In terms of biological role, catalyzes the conversion of 2-hydroxy-1,4-benzoxazin-3-one (HBOA) to 2,4-dihydroxy-1,4-benzoxazin-3-one (DIBOA). The polypeptide is Cytochrome P450 71C3 (CYP71C3) (Zea mays (Maize)).